Here is a 515-residue protein sequence, read N- to C-terminus: Hopanoid C-3 methylase (515 aa).

A B12-binding domain is found at 8 to 141 (PSPLMYTKVF…ETLARRGNID (134 aa)). The Radical SAM core domain occupies 181 to 395 (GTLDPCASIE…DIQHAVLPTR (215 aa)). Positions 195, 199, and 202 each coordinate [4Fe-4S] cluster.

The protein belongs to the radical SAM superfamily. [4Fe-4S] cluster serves as cofactor.

Its function is as follows. Required for methylation of hopanoids at the C-3 position. The polypeptide is Hopanoid C-3 methylase (Methylococcus capsulatus (strain ATCC 33009 / NCIMB 11132 / Bath)).